Consider the following 585-residue polypeptide: Rhizobactin siderophore biosynthesis protein RhbC (585 aa).

This sequence belongs to the IucA/IucC family.

Its pathway is siderophore biosynthesis; rhizobactin biosynthesis. The chain is Rhizobactin siderophore biosynthesis protein RhbC (rhbC) from Rhizobium meliloti (strain 1021) (Ensifer meliloti).